Here is a 1448-residue protein sequence, read N- to C-terminus: Gag-Pol polyprotein (1448 aa).

A lipid anchor (N-myristoyl glycine; by host) is attached at Gly-2. Positions 16 to 22 match the Nuclear export signal motif; the sequence is LEKIRLR. Positions 26-32 match the Nuclear localization signal motif; the sequence is KKKYMLK. Positions 218-227 are enriched in low complexity; sequence HPQQAPQQGQ. Positions 218–237 are disordered; it reads HPQQAPQQGQLREPSGSDIA. 2 CCHC-type zinc fingers span residues 391 to 408 and 412 to 429; these read IKCW…QCRA and QGCW…KCPN. The segment at 440 to 461 is disordered; sequence LGKEAPQFPHGSSASGADANCS. The region spanning 517 to 586 is the Peptidase A2 domain; that stretch reads VEVLLDTGAD…TPINIFGRNL (70 aa). Asp-522 serves as the catalytic For protease activity; shared with dimeric partner. Positions 640–830 constitute a Reverse transcriptase domain; it reads DGQLEEAPPT…PPFQWMGYEL (191 aa). 3 residues coordinate Mg(2+): Asp-706, Asp-781, and Asp-782. Residues 823–831 form an RT 'primer grip' region; sequence FQWMGYELW. Residues 993–1009 carry the Tryptophan repeat motif motif; that stretch reads WEQWWTDYWQVTWIPEW. In terms of domain architecture, RNase H type-1 spans 1029–1152; the sequence is IEGEETYYVD…IDHLVSQGIR (124 aa). The Mg(2+) site is built by Asp-1038, Glu-1073, Asp-1093, and Asp-1144. An Integrase-type zinc finger spans residues 1158–1199; sequence EKIEPAQEEHSKYHSNIKELVFKFGLPRLVAKQIVDTCDKCH. 4 residues coordinate Zn(2+): His-1167, His-1171, Cys-1195, and Cys-1198. The 151-residue stretch at 1209–1359 folds into the Integrase catalytic domain; the sequence is VNSDLGTWQM…TPAERLINMI (151 aa). The Mg(2+) site is built by Asp-1219 and Asp-1271. Positions 1378–1425 form a DNA-binding region, integrase-type; it reads FRVYYREGRDQLWKGPGELLWKGEGAVILKVGTDIKVVPRRKAKIIKD. The interval 1426–1448 is disordered; sequence YGGGKEMDSSSHMEDTGEAREVA.

As to quaternary structure, homotrimer. Interacts with gp41 (via C-terminus). Homodimer. The active site consists of two apposed aspartic acid residues. In terms of assembly, heterodimer of p66 RT and p51 RT (RT p66/p51). Heterodimerization of RT is essential for DNA polymerase activity. Despite the sequence identities, p66 RT and p51 RT have distinct folding. As to quaternary structure, homotetramer; may further associate as a homohexadecamer. It depends on Mg(2+) as a cofactor. In terms of processing, specific enzymatic cleavages by the viral protease yield mature proteins. The protease is released by autocatalytic cleavage. The polyprotein is cleaved during and after budding, this process is termed maturation. Proteolytic cleavage of p66 RT removes the RNase H domain to yield the p51 RT subunit. Capsid protein p24 is phosphorylated.

The protein localises to the virion. The protein resides in the host nucleus. Its subcellular location is the host cytoplasm. It localises to the host cell membrane. The enzyme catalyses Specific for a P1 residue that is hydrophobic, and P1' variable, but often Pro.. It catalyses the reaction Endohydrolysis of RNA in RNA/DNA hybrids. Three different cleavage modes: 1. sequence-specific internal cleavage of RNA. Human immunodeficiency virus type 1 and Moloney murine leukemia virus enzymes prefer to cleave the RNA strand one nucleotide away from the RNA-DNA junction. 2. RNA 5'-end directed cleavage 13-19 nucleotides from the RNA end. 3. DNA 3'-end directed cleavage 15-20 nucleotides away from the primer terminus.. The catalysed reaction is 3'-end directed exonucleolytic cleavage of viral RNA-DNA hybrid.. It carries out the reaction DNA(n) + a 2'-deoxyribonucleoside 5'-triphosphate = DNA(n+1) + diphosphate. With respect to regulation, the viral protease is inhibited by many synthetic protease inhibitors (PIs), such as amprenavir, atazanavir, indinavir, loprinavir, nelfinavir, ritonavir and saquinavir. RT can be inhibited either by nucleoside RT inhibitors (NRTIs) or by non nucleoside RT inhibitors (NNRTIs). NRTIs act as chain terminators, whereas NNRTIs inhibit DNA polymerization by binding a small hydrophobic pocket near the RT active site and inducing an allosteric change in this region. Classical NRTIs are abacavir, adefovir (PMEA), didanosine (ddI), lamivudine (3TC), stavudine (d4T), tenofovir (PMPA), zalcitabine (ddC), and zidovudine (AZT). Classical NNRTIs are atevirdine (BHAP U-87201E), delavirdine, efavirenz (DMP-266), emivirine (I-EBU), and nevirapine (BI-RG-587). The tritherapies used as a basic effective treatment of AIDS associate two NRTIs and one NNRTI. Use of protease inhibitors in tritherapy regimens permit more ambitious therapeutic strategies. Gag-Pol polyprotein and Gag polyprotein may regulate their own translation, by the binding genomic RNA in the 5'-UTR. At low concentration, Gag-Pol and Gag would promote translation, whereas at high concentration, the polyproteins encapsidate genomic RNA and then shut off translation. Its function is as follows. Matrix protein p17 has two main functions: in infected cell, it targets Gag and Gag-pol polyproteins to the plasma membrane via a multipartite membrane-binding signal, that includes its myristointegration complex. The myristoylation signal and the NLS exert conflicting influences its subcellular localization. The key regulation of these motifs might be phosphorylation of a portion of MA molecules on the C-terminal tyrosine at the time of virus maturation, by virion-associated cellular tyrosine kinase. Implicated in the release from host cell mediated by Vpu. Functionally, capsid protein p24 forms the conical core that encapsulates the genomic RNA-nucleocapsid complex in the virion. The core is constituted by capsid protein hexamer subunits. The core is disassembled soon after virion entry. Interaction with host PPIA/CYPA protects the virus from restriction by host TRIM5-alpha and from an unknown antiviral activity in host cells. This capsid restriction by TRIM5 is one of the factors which restricts SIV to the simian species. In terms of biological role, nucleocapsid protein p7 encapsulates and protects viral dimeric unspliced (genomic) RNA. Binds these RNAs through its zinc fingers. Facilitates rearangement of nucleic acid secondary structure during retrotranscription of genomic RNA. This capability is referred to as nucleic acid chaperone activity. The aspartyl protease mediates proteolytic cleavages of Gag and Gag-Pol polyproteins during or shortly after the release of the virion from the plasma membrane. Cleavages take place as an ordered, step-wise cascade to yield mature proteins. This process is called maturation. Displays maximal activity during the budding process just prior to particle release from the cell. Also cleaves Nef and Vif, probably concomitantly with viral structural proteins on maturation of virus particles. Hydrolyzes host EIF4GI and PABP1 in order to shut off the capped cellular mRNA translation. The resulting inhibition of cellular protein synthesis serves to ensure maximal viral gene expression and to evade host immune response. Its function is as follows. Reverse transcriptase/ribonuclease H (RT) is a multifunctional enzyme that converts the viral dimeric RNA genome into dsDNA in the cytoplasm, shortly after virus entry into the cell. This enzyme displays a DNA polymerase activity that can copy either DNA or RNA templates, and a ribonuclease H (RNase H) activity that cleaves the RNA strand of RNA-DNA heteroduplexes in a partially processive 3' to 5' endonucleasic mode. Conversion of viral genomic RNA into dsDNA requires many steps. A tRNA binds to the primer-binding site (PBS) situated at the 5'-end of the viral RNA. RT uses the 3' end of the tRNA primer to perform a short round of RNA-dependent minus-strand DNA synthesis. The reading proceeds through the U5 region and ends after the repeated (R) region which is present at both ends of viral RNA. The portion of the RNA-DNA heteroduplex is digested by the RNase H, resulting in a ssDNA product attached to the tRNA primer. This ssDNA/tRNA hybridizes with the identical R region situated at the 3' end of viral RNA. This template exchange, known as minus-strand DNA strong stop transfer, can be either intra- or intermolecular. RT uses the 3' end of this newly synthesized short ssDNA to perform the RNA-dependent minus-strand DNA synthesis of the whole template. RNase H digests the RNA template except for two polypurine tracts (PPTs) situated at the 5'-end and near the center of the genome. It is not clear if both polymerase and RNase H activities are simultaneous. RNase H can probably proceed both in a polymerase-dependent (RNA cut into small fragments by the same RT performing DNA synthesis) and a polymerase-independent mode (cleavage of remaining RNA fragments by free RTs). Secondly, RT performs DNA-directed plus-strand DNA synthesis using the PPTs that have not been removed by RNase H as primers. PPTs and tRNA primers are then removed by RNase H. The 3' and 5' ssDNA PBS regions hybridize to form a circular dsDNA intermediate. Strand displacement synthesis by RT to the PBS and PPT ends produces a blunt ended, linear dsDNA copy of the viral genome that includes long terminal repeats (LTRs) at both ends. Functionally, integrase catalyzes viral DNA integration into the host chromosome, by performing a series of DNA cutting and joining reactions. This enzyme activity takes place after virion entry into a cell and reverse transcription of the RNA genome in dsDNA. The first step in the integration process is 3' processing. This step requires a complex comprising the viral genome, matrix protein, Vpr and integrase. This complex is called the pre-integration complex (PIC). The integrase protein removes 2 nucleotides from each 3' end of the viral DNA, leaving recessed CA OH's at the 3' ends. In the second step, the PIC enters cell nucleus. This process is mediated through integrase and Vpr proteins, and allows the virus to infect a non dividing cell. This ability to enter the nucleus is specific of lentiviruses, other retroviruses cannot and rely on cell division to access cell chromosomes. In the third step, termed strand transfer, the integrase protein joins the previously processed 3' ends to the 5' ends of strands of target cellular DNA at the site of integration. The 5'-ends are produced by integrase-catalyzed staggered cuts, 5 bp apart. A Y-shaped, gapped, recombination intermediate results, with the 5'-ends of the viral DNA strands and the 3' ends of target DNA strands remaining unjoined, flanking a gap of 5 bp. The last step is viral DNA integration into host chromosome. This involves host DNA repair synthesis in which the 5 bp gaps between the unjoined strands are filled in and then ligated. Since this process occurs at both cuts flanking the SIV genome, a 5 bp duplication of host DNA is produced at the ends of SIV integration. Alternatively, Integrase may catalyze the excision of viral DNA just after strand transfer, this is termed disintegration. The polypeptide is Gag-Pol polyprotein (gag-pol) (Cercopithecidae (Old World monkeys)).